The chain runs to 361 residues: Beta-hexosaminidase (361 aa).

Substrate contacts are provided by residues D69, R77, R144, and 174-175; that span reads KH. Catalysis depends on H187, which acts as the Proton donor/acceptor. Catalysis depends on D258, which acts as the Nucleophile.

It belongs to the glycosyl hydrolase 3 family. NagZ subfamily.

The protein localises to the cytoplasm. It catalyses the reaction Hydrolysis of terminal non-reducing N-acetyl-D-hexosamine residues in N-acetyl-beta-D-hexosaminides.. The protein operates within cell wall biogenesis; peptidoglycan recycling. Functionally, plays a role in peptidoglycan recycling by cleaving the terminal beta-1,4-linked N-acetylglucosamine (GlcNAc) from peptide-linked peptidoglycan fragments, giving rise to free GlcNAc, anhydro-N-acetylmuramic acid and anhydro-N-acetylmuramic acid-linked peptides. This Neisseria gonorrhoeae (strain NCCP11945) protein is Beta-hexosaminidase.